A 72-amino-acid chain; its full sequence is Aurein-2.2 (72 aa).

An N-terminal signal peptide occupies residues 1-22; sequence MAFLKKSLFLVLFLGLVSLSIC. The propeptide occupies 23-49; the sequence is EKEKRQNEEDEDENEAANHEEGSEEKR. Residues 27 to 47 form a disordered region; it reads RQNEEDEDENEAANHEEGSEE. Positions 38–47 are enriched in basic and acidic residues; sequence AANHEEGSEE. Position 65 is a leucine amide (L65). Positions 69–72 are excised as a propeptide; the sequence is NDLE.

Post-translationally, amidation is essential for antibacterial activity against Gram-positive bacteria. Expressed by the skin dorsal glands.

It localises to the secreted. The protein localises to the target cell membrane. In terms of biological role, amphipathic alpha-helical antimicrobial peptide with weak to moderate activity against Gram-positive bacteria, and no activity against Gram-negative bacteria. Probably acts by disturbing membrane functions with its amphipathic structure. Strongly inhibits the formation of NO by neuronal nitric oxide synthase (nNOS) at micromolar concentrations. Acts by a non-competitive mechanism, probably by binding to calcium/calmodulin and as a consequence blocking calmodulin attachment to nNOS. This Ranoidea aurea (Green and golden bell frog) protein is Aurein-2.2.